The primary structure comprises 349 residues: UPF0283 membrane protein Ent638_2153 (349 aa).

3 helical membrane-spanning segments follow: residues 70 to 90 (MVTA…VQWT), 99 to 119 (WVAL…VGSV), and 213 to 233 (ESTL…FIAW).

Belongs to the UPF0283 family.

Its subcellular location is the cell inner membrane. In Enterobacter sp. (strain 638), this protein is UPF0283 membrane protein Ent638_2153.